A 334-amino-acid polypeptide reads, in one-letter code: Ephrin-B1 (334 aa).

The first 25 residues, 1 to 25 (MARPRGGRWLLGVLLALCRLAAPLA), serve as a signal peptide directing secretion. Residues 26-160 (KSLEPVSWSA…TRSMKIVMKV (135 aa)) enclose the Ephrin RBD domain. The Extracellular segment spans residues 26–231 (KSLEPVSWSA…FLSSKVAVFA (206 aa)). 2 cysteine pairs are disulfide-bonded: Cys60–Cys97 and Cys85–Cys149. An N-linked (GlcNAc...) asparagine glycan is attached at Asn135. The disordered stretch occupies residues 175–218 (SRPSKEADNTVKIVTQSPRHKVPTVEEPGKPGSVNQNGQETQGP). Residues 207 to 218 (SVNQNGQETQGP) show a composition bias toward polar residues. A helical membrane pass occupies residues 232–252 (AIGAGCVIFILIIIFLVVLLI). The Cytoplasmic portion of the chain corresponds to 253-334 (KIRKRHRKHT…QSPANIYYKV (82 aa)). The PDZ-binding signature appears at 332–334 (YKV).

This sequence belongs to the ephrin family. As to quaternary structure, binds to the receptor tyrosine kinase EPHB2. Interacts with GRIP1 and GRIP2. Inducible phosphorylation of tyrosine residues in the cytoplasmic domain.

It is found in the membrane. Cell surface transmembrane ligand for Eph receptors, a family of receptor tyrosine kinases which are crucial for migration, repulsion and adhesion during neuronal, vascular and epithelial development. Binds promiscuously Eph receptors residing on adjacent cells, leading to contact-dependent bidirectional signaling into neighboring cells. The signaling pathway downstream of the receptor is referred to as forward signaling while the signaling pathway downstream of the ephrin ligand is referred to as reverse signaling. The sequence is that of Ephrin-B1 (EFNB1) from Gallus gallus (Chicken).